The following is a 221-amino-acid chain: Large ribosomal subunit protein uL4 (221 aa).

A disordered region spans residues 46–74 (AGTASTKTRSEVSGGGRKPWPQKHTGRAR).

It belongs to the universal ribosomal protein uL4 family. As to quaternary structure, part of the 50S ribosomal subunit.

In terms of biological role, one of the primary rRNA binding proteins, this protein initially binds near the 5'-end of the 23S rRNA. It is important during the early stages of 50S assembly. It makes multiple contacts with different domains of the 23S rRNA in the assembled 50S subunit and ribosome. Its function is as follows. Forms part of the polypeptide exit tunnel. This is Large ribosomal subunit protein uL4 from Petrotoga mobilis (strain DSM 10674 / SJ95).